Here is a 189-residue protein sequence, read N- to C-terminus: Ribosomal RNA large subunit methyltransferase E (189 aa).

S-adenosyl-L-methionine contacts are provided by Gly-45, Phe-47, Asp-64, Asp-82, and Asp-104. Lys-144 (proton acceptor) is an active-site residue.

The protein belongs to the class I-like SAM-binding methyltransferase superfamily. RNA methyltransferase RlmE family.

The protein resides in the cytoplasm. The catalysed reaction is uridine(2552) in 23S rRNA + S-adenosyl-L-methionine = 2'-O-methyluridine(2552) in 23S rRNA + S-adenosyl-L-homocysteine + H(+). Specifically methylates the uridine in position 2552 of 23S rRNA at the 2'-O position of the ribose in the fully assembled 50S ribosomal subunit. The protein is Ribosomal RNA large subunit methyltransferase E of Borreliella afzelii (strain PKo) (Borrelia afzelii).